The primary structure comprises 1347 residues: MSHLLFAYYLCNDIRSFQNLLKQDDSKVKEPRKGFSEKSGQKLRINQKDRYGRTVLHIAVSENKNSFVRSLLQHKGIDVFVQDEESGYTALHRAIYVGNLEAASLLLSKDPSFRSLRIKDKEGLSPFQFLSRVLSSTIHPVLDLPIIGNELYGFGTNVNNTLGIANGKEPSSPERVFLLKNQTESPTSGQLFSRDKILDVQASKFHSVVLTDEPSQNVYVCGIGAGGRIGFNTDVQYNFIPIPGIIHKVIQISVSHTHSLALTKFGSIYSWGKNGSGELGLSNDELKKDDPIQITPRRISAFKDYQIIGMAAGKSYSVAWTDTDIYSWGLNNGQLGISDHISVVSTPRRVAGLLSPVIHAVCTTRATICLLQNNSIIAFCNYNQVKLPFNVDFGSSLKVTKHPLSLTRFNVRKLLASENKLAVLTELGEVYEFDMKLLLDRDSTSSKNSTRTSFKFTPLWIFESSDLAALDIAWTADNSLILCTRNGTCWKRELRSKKREKSSSSPYSRGPYKYNRIENLQMVVGVRASASGSFFAIRNDYLPPPIYKPSNMLIDLLRSLLPYDHLLHVRQPRLIPPEDEDGVPIFDEDRAASSNEMQLLFEGSIPILTSYENYKQSFSDVTIYCGTSMFHSHKFILCARSSFLRKLLLQKKKSSVSNIIYIEEITQSHSTIRVEDIPPLAVAILLHYLYTDTLLSPWHLDSRFSPLKENLSKLANLLELPHLAEVLPFSVSRQPLLSLTNDILQLYNNFYVLCEETMDTVIKLKDGELKAHGLFLSLRSEYFSSYFQFVSMESNSFDIPITVNLSHLTVEHMSIVLRHVYSDLKVELFDDLKESDFHNWLETMFEILSIADELLFLELKSIAQQSLLRFLNLKTLPTLMDLSLSYHAEELYSRCIDYACHNIEFFLEANRISEWDGFHLKKVAQRLTELLSDQRVHLPSSKIANRLLIRDPVLMEKRNYELKVLREYLFSQESSQLWDDSPYRSIFEDRRCSTSAVILESGIVPSSNQSDSLNKEDAEEKSPKPNVVNVTSITKTAGASVEIQNNIESASSGGDKTQLNGPGADQPVTATITFDKTSPWRNRENLSHNNNTTRASLRELLEQEKADASTTTVLSDSRFMKAPTKKSQREKKKELSKQVPISKTNVGHIDIELGKSNHSNPWSVATHQRGSFSSSTGVKKSFNGILREAAREEGSSQVIYQESKKRISNGSPTSWNLLTKPSPRSASLPKNSQPLSISEIMTEQKEEIESQKRRSSFRKTIEEIQQEEEFQKWWEEESLRVQKELGILKTERDTSTNRKQGQASKQPQRRHRKEKDSKVSESTAEFKSLPIDIPRTTHKKGKARAVK.

ANK repeat units follow at residues 51–81 (YGRTVLHIAVSENKNSFVRSLLQHKGIDVFV) and 86–115 (SGYTALHRAIYVGNLEAASLLLSKDPSFRS). RCC1 repeat units follow at residues 148 to 198 (GNEL…DKIL), 215 to 264 (SQNV…ALTK), 265 to 322 (FGSI…AWTD), and 324 to 372 (DIYS…CLLQ). 2 consecutive BTB domains span residues 619–698 (SDVT…LSPW) and 758–829 (MDTV…VELF). Disordered regions lie at residues 1006–1029 (SSNQSDSLNKEDAEEKSPKPNVVN), 1104–1139 (EKADASTTTVLSDSRFMKAPTKKSQREKKKELSKQV), 1193–1237 (EGSS…PLSI), and 1286–1347 (GILK…RAVK). Residues 1013-1023 (LNKEDAEEKSP) show a composition bias toward basic and acidic residues. Composition is skewed to polar residues over residues 1208–1237 (SNGSPTSWNLLTKPSPRSASLPKNSQPLSI) and 1297–1306 (NRKQGQASKQ). Residues 1336-1347 (TTHKKGKARAVK) are compositionally biased toward basic residues.

In terms of assembly, interacts with cul3.

It participates in protein modification; protein ubiquitination. Its function is as follows. Probable substrate-specific adapter of an E3 ubiquitin-protein ligase complex which mediates the ubiquitination and subsequent proteasomal degradation of target proteins. This is BTB/POZ domain-containing protein 1 (btb1) from Schizosaccharomyces pombe (strain 972 / ATCC 24843) (Fission yeast).